Here is a 363-residue protein sequence, read N- to C-terminus: UDP-N-acetylenolpyruvoylglucosamine reductase (363 aa).

Positions Ile25–Leu201 constitute an FAD-binding PCMH-type domain. The active site involves Arg168. The active-site Proton donor is Ser249. Residue Glu352 is part of the active site.

The protein belongs to the MurB family. The cofactor is FAD.

The protein resides in the cytoplasm. It carries out the reaction UDP-N-acetyl-alpha-D-muramate + NADP(+) = UDP-N-acetyl-3-O-(1-carboxyvinyl)-alpha-D-glucosamine + NADPH + H(+). Its pathway is cell wall biogenesis; peptidoglycan biosynthesis. Its function is as follows. Cell wall formation. The polypeptide is UDP-N-acetylenolpyruvoylglucosamine reductase (Mycolicibacterium smegmatis (strain ATCC 700084 / mc(2)155) (Mycobacterium smegmatis)).